Reading from the N-terminus, the 301-residue chain is Protoheme IX farnesyltransferase (301 aa).

The next 9 helical transmembrane spans lie at 16–36, 41–61, 93–113, 114–134, 141–161, 172–192, 217–237, 238–258, and 273–293; these read VVALIVFTALVGMFLAIPGMP, IQSGALGFLGIWLAAAAAAAI, VFAGVLITLSMTILTLWVNLI, TAVLTFTSLIGYAVIYTVYLK, IVIGGLAGAMPPMLGWAAVTG, SLLVAIIFVWTPPHFWALAIF, QILLYTVILSVVTLLPVATGM, SGVFYLGAALVLDAVFLWYAW, and FGYSIVYLMALFAFLMFDHWL.

The protein belongs to the UbiA prenyltransferase family. Protoheme IX farnesyltransferase subfamily.

It localises to the cell inner membrane. It catalyses the reaction heme b + (2E,6E)-farnesyl diphosphate + H2O = Fe(II)-heme o + diphosphate. The protein operates within porphyrin-containing compound metabolism; heme O biosynthesis; heme O from protoheme: step 1/1. Functionally, converts heme B (protoheme IX) to heme O by substitution of the vinyl group on carbon 2 of heme B porphyrin ring with a hydroxyethyl farnesyl side group. The sequence is that of Protoheme IX farnesyltransferase from Xylella fastidiosa (strain Temecula1 / ATCC 700964).